Reading from the N-terminus, the 645-residue chain is Pro-neuregulin-1, membrane-bound isoform (645 aa).

Residues 1–19 constitute a propeptide that is removed on maturation; sequence MSERKEGRGKGKGKKKDRG. The interval 1-52 is disordered; that stretch reads MSERKEGRGKGKGKKKDRGSRGKPAPAEGDPSPALPPRLKEMKSQESAAGSK. At 20 to 247 the chain is on the extracellular side; it reads SRGKPAPAEG…MEAEELYQKR (228 aa). The Ig-like C2-type domain occupies 37–128; it reads PRLKEMKSQE…GNDSASANIT (92 aa). A disulfide bond links Cys57 and Cys112. The span at 139–164 shows a compositional bias: polar residues; the sequence is MSASTERPYVSSESPIRISVSTEGAN. The tract at residues 139 to 175 is disordered; sequence MSASTERPYVSSESPIRISVSTEGANTSSSTSTSTTG. The segment covering 165 to 175 has biased composition (low complexity); sequence TSSSTSTSTTG. The EGF-like domain maps to 178–222; the sequence is HLIKCAEKEKTFCVNGGECFMVKDLSNPSRYLCKCPNEFTGDRCQ. 3 disulfides stabilise this stretch: Cys182–Cys196, Cys190–Cys210, and Cys212–Cys221. The chain crosses the membrane as a helical span at residues 248-268; the sequence is VLTITGICIALLVVGIMCVVA. Residues 269 to 645 are Cytoplasmic-facing; the sequence is YCKTKKQRQK…VIANQDPIAV (377 aa). Over residues 340–355 the composition is skewed to low complexity; it reads SHYTSTAHHSTTVTQT. Disordered stretches follow at residues 340-364, 380-406, 433-463, and 531-593; these read SHYT…SNGH, SVEN…PREC, MTTP…PVSS, and ETTQ…DTPF. Residues 392–402 are compositionally biased toward gly residues; it reads GPRGRLHGLGG. Residues 547-557 are compositionally biased toward basic residues; that stretch reads TNSRRAKRTKP. The span at 568-579 shows a compositional bias: low complexity; the sequence is DSNPSSVSSNSE.

The protein belongs to the neuregulin family. As to quaternary structure, the cytoplasmic domain interacts with the LIM domain region of LIMK1. Forms a ternary complex with ERBB3 and ITGAV:ITGB3 or ITGA6:ITGB4. Interacts with NRDC and BACE1. Post-translationally, proteolytic cleavage close to the plasma membrane on the external face leads to the release of the soluble growth factor form. In terms of processing, N- and O-glycosylated. Extensive glycosylation precedes the proteolytic cleavage.

Its subcellular location is the cell membrane. The protein resides in the secreted. In terms of biological role, direct ligand for ERBB3 and ERBB4 tyrosine kinase receptors. Concomitantly recruits ERBB1 and ERBB2 coreceptors, resulting in ligand-stimulated tyrosine phosphorylation and activation of the ERBB receptors. Perform diverse functions such as inducing growth and differentiation of epithelial, glial, neuronal, and skeletal muscle cells; inducing expression of acetylcholine receptor in synaptic vesicles during the formation of the neuromuscular junction; stimulating lobuloalveolar budding and milk production in the mammary gland and inducing differentiation of mammary tumor cells; stimulating Schwann cell proliferation; implication in the development of the myocardium such as trabeculation of the developing heart. Binds to ERBB4 and ERBB3. Acts as a ligand for integrins and binds (via EGF domain) to integrins ITGAV:ITGB3 or ITGA6:ITGB4. Its binding to integrins and subsequent ternary complex formation with integrins and ERRB3 are essential for NRG1-ERBB signaling. Induces the phosphorylation and activation of MAPK3/ERK1, MAPK1/ERK2 and AKT1, and ligand-dependent ERBB4 endocytosis is essential for the NRG1-mediated activation of these kinases in neurons. The sequence is that of Pro-neuregulin-1, membrane-bound isoform from Mus musculus (Mouse).